The following is a 390-amino-acid chain: Methylthioribose-1-phosphate isomerase (390 aa).

Aspartate 258 (proton donor) is an active-site residue.

This sequence belongs to the eIF-2B alpha/beta/delta subunits family. MtnA subfamily.

The protein localises to the cytoplasm. The protein resides in the nucleus. It catalyses the reaction 5-(methylsulfanyl)-alpha-D-ribose 1-phosphate = 5-(methylsulfanyl)-D-ribulose 1-phosphate. Its pathway is amino-acid biosynthesis; L-methionine biosynthesis via salvage pathway; L-methionine from S-methyl-5-thio-alpha-D-ribose 1-phosphate: step 1/6. Functionally, catalyzes the interconversion of methylthioribose-1-phosphate (MTR-1-P) into methylthioribulose-1-phosphate (MTRu-1-P). In Coccidioides posadasii (strain C735) (Valley fever fungus), this protein is Methylthioribose-1-phosphate isomerase.